The primary structure comprises 550 residues: Hydroxylamine reductase (550 aa).

Positions 3, 6, 18, and 25 each coordinate [2Fe-2S] cluster. 8 residues coordinate hybrid [4Fe-2O-2S] cluster: histidine 249, glutamate 273, cysteine 317, cysteine 405, cysteine 433, cysteine 458, glutamate 492, and lysine 494. At cysteine 405 the chain carries Cysteine persulfide.

This sequence belongs to the HCP family. It depends on [2Fe-2S] cluster as a cofactor. Hybrid [4Fe-2O-2S] cluster is required as a cofactor.

The protein resides in the cytoplasm. It catalyses the reaction A + NH4(+) + H2O = hydroxylamine + AH2 + H(+). Functionally, catalyzes the reduction of hydroxylamine to form NH(3) and H(2)O. In Salmonella paratyphi A (strain ATCC 9150 / SARB42), this protein is Hydroxylamine reductase.